Consider the following 121-residue polypeptide: Small ribosomal subunit protein uS13 (121 aa).

The disordered stretch occupies residues 91-121 (HRRGLPVRGQKTKNNARTRKGPVKTVANKKK).

The protein belongs to the universal ribosomal protein uS13 family. In terms of assembly, part of the 30S ribosomal subunit. Forms a loose heterodimer with protein S19. Forms two bridges to the 50S subunit in the 70S ribosome.

Functionally, located at the top of the head of the 30S subunit, it contacts several helices of the 16S rRNA. In the 70S ribosome it contacts the 23S rRNA (bridge B1a) and protein L5 of the 50S subunit (bridge B1b), connecting the 2 subunits; these bridges are implicated in subunit movement. Contacts the tRNAs in the A and P-sites. The sequence is that of Small ribosomal subunit protein uS13 from Staphylococcus carnosus (strain TM300).